Reading from the N-terminus, the 231-residue chain is Ribosyldihydronicotinamide dehydrogenase [quinone] (231 aa).

Residues histidine 12 and 18–21 (FNGS) each bind FAD. Residue serine 80 is modified to Phosphoserine. Residue 104–107 (LYWF) coordinates FAD. 127 to 129 (FDI) contacts substrate. Residues 148–151 (TTGG) and tyrosine 156 contribute to the FAD site. 2 residues coordinate Zn(2+): histidine 174 and histidine 178. Glutamate 194 contacts FAD. At serine 197 the chain carries Phosphoserine. Arginine 201 contacts FAD. Zn(2+) is bound at residue cysteine 223.

Belongs to the NAD(P)H dehydrogenase (quinone) family. As to quaternary structure, homodimer. Zn(2+) is required as a cofactor. The cofactor is FAD.

It is found in the cytoplasm. It catalyses the reaction 1-(beta-D-ribofuranosyl)-1,4-dihydronicotinamide + a quinone + H(+) = beta-nicotinamide D-riboside + a quinol. Its activity is regulated as follows. Inhibited by melatonin, resveratrol and 5-hydroxytryptamine. The enzyme apparently serves as a quinone reductase in connection with conjugation reactions of hydroquinones involved in detoxification pathways as well as in biosynthetic processes such as the vitamin K-dependent gamma-carboxylation of glutamate residues in prothrombin synthesis. The sequence is that of Ribosyldihydronicotinamide dehydrogenase [quinone] (NQO2) from Homo sapiens (Human).